We begin with the raw amino-acid sequence, 76 residues long: MSKFFRRRKFCKFTAEGVKEIDYKDLNTLRQYLTENGKIVPSRVTGTKSKYQRQLATAVKRARFLALIPYTDNHDV.

The protein belongs to the bacterial ribosomal protein bS18 family. In terms of assembly, part of the 30S ribosomal subunit. Forms a tight heterodimer with protein bS6.

Functionally, binds as a heterodimer with protein bS6 to the central domain of the 16S rRNA, where it helps stabilize the platform of the 30S subunit. In Xanthomonas euvesicatoria pv. vesicatoria (strain 85-10) (Xanthomonas campestris pv. vesicatoria), this protein is Small ribosomal subunit protein bS18.